Here is a 336-residue protein sequence, read N- to C-terminus: Potassium channel subfamily K member 1 (336 aa).

Topologically, residues 1–20 (MLQSLAGSSCVRLVERHRSA) are cytoplasmic. A helical membrane pass occupies residues 21–41 (WCFGFLVLGYLLYLVFGAVVF). The Extracellular portion of the chain corresponds to 42-103 (SSVELPYEDL…SNASGNWNWD (62 aa)). An N-linked (GlcNAc...) asparagine glycan is attached at asparagine 95. Positions 104–116 (FTSALFFASTVLS) form an intramembrane region, helical. The stretch at 117 to 122 (TTGYGH) is an intramembrane region. Residues 117–122 (TTGYGH) are selectivity filter 1. Residues 123–132 (TVPLSDGGKA) are Extracellular-facing. The helical transmembrane segment at 133–156 (FCIIYSVIGIPFTLLFLTAVVQRV) threads the bilayer. The Cytoplasmic portion of the chain corresponds to 157-181 (TVHVTRRPVLYFHIRWGFSKQVVAI). Residues 182–202 (VHAVLLGFVTVSCFFFIPAAV) traverse the membrane as a helical segment. Topologically, residues 203 to 211 (FSVLEDDWN) are extracellular. Positions 212 to 224 (FLESFYFCFISLS) form an intramembrane region, helical. The tract at residues 225–230 (TIGLGD) is selectivity filter 2. The stretch at 225-231 (TIGLGDY) is an intramembrane region. The Extracellular segment spans residues 232-243 (VPGEGYNQKFRE). A helical transmembrane segment spans residues 244-267 (LYKIGITCYLLLGLIAMLVVLETF). At 268–336 (CELHELKKFR…PPYEDGSADH (69 aa)) the chain is on the cytoplasmic side. Lysine 274 participates in a covalent cross-link: Glycyl lysine isopeptide (Lys-Gly) (interchain with G-Cter in SUMO). An important for intracellular retention in recycling endosomes region spans residues 293-299 (IMEHDQL). The interval 310 to 336 (GLKEEQKQSEPFVASQSPPYEDGSADH) is disordered. At serine 326 the chain carries Phosphoserine.

This sequence belongs to the two pore domain potassium channel (TC 1.A.1.8) family. In terms of assembly, homodimer; disulfide-linked. Heterodimer with KCNK2; disulfide-linked. In astrocytes, forms mostly heterodimeric potassium channels with KCNK2, with only a minor proportion of functional channels containing homodimeric KCNK1. Interacts with KCNK3 and KCNK9, forming functional heterodimeric channels. Interacts with GNG4. Identified in a complex with PSD and ARF6; interacts only with PSD that is bound to ARF6. Interacts with UBE2I. Sumoylation is controversial. Sumoylated by UBE2I. Not sumoylated when expressed in xenopus oocytes or mammalian cells. Sumoylation inactivates the channel, but does not interfere with expression at the cell membrane. Sumoylation of a single subunit is sufficient to silence the dimeric channel. Sumoylation of KCNK1 is sufficient to silence heterodimeric channels formed by KCNK1 and KCNK3 or KCNK9. Desumoylated by SENP1; this activates the channel. Desumoylated by SENP1; this strongly increases halothane-mediated activation of heterodimeric channels formed with KCNK9. SENP1 treatment has no effect. Detected in spiral ganglion neurons. Detected in hippocampus CA1 and CA1 regions and in the molecular layer of the dentate gyrus. Detected on hippocampus astrocytes. Highly expressed in the stria vascularis in the cochlea. Detected in pancreas islet beta cells. Detected in kidney, at brush border membranes in proximal tubules and in cytoplasmic structures in distal convoluted tubules, thick ascending limbs and collecting ducts (at protein level). Widely expressed. Detected in spiral ganglion cells. Highest expression in brain, kidney, thyroid, salivary gland, adrenal gland, prostate, epididymis, uterus, placenta, colon and jejunum. Moderate expression in eyes, pituitary, pancreas, smooth muscle, testis and ovary. Very low levels in lung, aorta, liver, heart, skeletal muscle, thymus and spleen. In the brain, highest expression in cerebellar granule cells, brainstem, hippocampus and cerebral cortex.

It is found in the cell membrane. Its subcellular location is the recycling endosome. It localises to the apical cell membrane. The protein localises to the cytoplasmic vesicle. The protein resides in the perikaryon. It is found in the cell projection. Its subcellular location is the dendrite. It localises to the synaptic cell membrane. It carries out the reaction K(+)(in) = K(+)(out). The enzyme catalyses NH4(+)(in) = NH4(+)(out). It catalyses the reaction Na(+)(in) = Na(+)(out). The catalysed reaction is Rb(+)(in) = Rb(+)(out). It carries out the reaction Cs(+)(in) = Cs(+)(out). The enzyme catalyses Li(+)(in) = Li(+)(out). It catalyses the reaction L-glutamate(out) = L-glutamate(in). The catalysed reaction is chloride(in) = chloride(out). With respect to regulation, inhibited by quinine, quinidine, barium, and internal acidification. Its function is as follows. Ion channel that contributes to passive transmembrane potassium transport and to the regulation of the resting membrane potential in brain astrocytes, but also in kidney and in other tissues. Forms dimeric channels through which potassium ions pass in accordance with their electrochemical gradient. The channel is selective for K(+) ions at physiological potassium concentrations and at neutral pH, but becomes permeable to Na(+) at subphysiological K(+) levels and upon acidification of the extracellular medium. The homodimer has very low potassium channel activity, when expressed in heterologous systems, and can function as weakly inward rectifying potassium channel. Channel activity is modulated by activation of serotonin receptors. Heterodimeric channels containing KCNK1 and KCNK2 have much higher activity, and may represent the predominant form in astrocytes. Heterodimeric channels containing KCNK1 and KCNK3 or KCNK9 have much higher activity. Heterodimeric channels formed by KCNK1 and KCNK9 may contribute to halothane-sensitive currents. Mediates outward rectifying potassium currents in dentate gyrus granule cells and contributes to the regulation of their resting membrane potential. Contributes to the regulation of action potential firing in dentate gyrus granule cells and down-regulates their intrinsic excitability. In astrocytes, the heterodimer formed by KCNK1 and KCNK2 is required for rapid glutamate release in response to activation of G-protein coupled receptors, such as F2R and CNR1. Required for normal ion and water transport in the kidney. Contributes to the regulation of the resting membrane potential of pancreatic beta cells. The low channel activity of homodimeric KCNK1 may be due to sumoylation. The low channel activity may be due to rapid internalization from the cell membrane and retention in recycling endosomes. Permeable to monovalent cations with ion selectivity for K(+) &gt; Rb(+) &gt;&gt; NH4(+) &gt;&gt; Cs(+) = Na(+) = Li(+). The polypeptide is Potassium channel subfamily K member 1 (Kcnk1) (Mus musculus (Mouse)).